We begin with the raw amino-acid sequence, 170 residues long: Small ribosomal subunit protein uS5 (170 aa).

The S5 DRBM domain occupies 13 to 76 (LLEKLVGVRR…ENARKNMISV (64 aa)).

Belongs to the universal ribosomal protein uS5 family. In terms of assembly, part of the 30S ribosomal subunit. Contacts proteins S4 and S8.

Its function is as follows. With S4 and S12 plays an important role in translational accuracy. In terms of biological role, located at the back of the 30S subunit body where it stabilizes the conformation of the head with respect to the body. This Nitrosococcus oceani (strain ATCC 19707 / BCRC 17464 / JCM 30415 / NCIMB 11848 / C-107) protein is Small ribosomal subunit protein uS5.